Consider the following 140-residue polypeptide: Sex-regulated protein janus-B (140 aa).

Arg-42 contacts substrate. The Proton acceptor role is filled by His-69. Ser-110–Thr-112 contacts substrate.

It belongs to the janus family.

JanA and janB regulate somatic sex differentiation. The chain is Sex-regulated protein janus-B (janB) from Drosophila yakuba (Fruit fly).